An 890-amino-acid polypeptide reads, in one-letter code: MSKDYDHRGIEAAAQADWERTQVYRVTENAVNASGKKKPKYYACSMLPYPSGKLHMGHVRNYTINDVMARQLRMQGYNVLMPMGWDAFGMPAENAAIQNKVPPAKWTYDNIAYMKKQMAAMGLAIDWSREVATCSPDYYRWNQWLFLKMLEKGVAYRKTQVVNWDPIDQTVLANEQVIDGRGWRSGALVEKREIPGYYFNITAYAEQLLSGLDGLGWPERVKTMQQNWIGKSRGVRFAFKHEIADAHGNFIQDGLLYVFTTRADTIMGVTFCAVAAEHPLASKAAENNPTLAAFIEKCKTGSVIEADLATQEKEGMFTGLYVTHPLTNESVPVWVGNYVLMSYGDGAVMGVPAHDERDFAFALKYELPIKQVIALKDESPMFNGTHWQDWYAQKENVVCFNSGKFDGLSHEEAVNTVASDLEKMGIGELKTTYRLRDWGISRQRYWGTPIPIIHCGDEGNPGCGAVPVPEADLPVVLPEDCVPDGSGNPLNKRADFLNVKCPQCGKPARRETDTMDTFVDSSWYFMRYTGPDATSMVDGRNEYWMPMDQYIGGIEHAILHLLYARFWTKVMRDLDLITFDEPFQNLLTQGMVLNETYYSEEASGKKTWLNPLDVELDLDEKGRPQGAKLKGDSSGTPVIIGGVEKMSKSKNNGVDPQALIDQYGADTARLFVMFAAPPEQQLEWSGAGVDGASRFLRRVWMYSSSQASAIKDAQDALPSTLNDAEKELRREVHAILKQANFDYQRRQYNTVVSAAMKMLNVLEPIKLGQDSPISASVLRECLSILLRVLYPVVPHLTHVLWKDMGYSENFGSLLDAPWPTVDETALIQTEITLMLQINGKLRGELKVPADASKEQIEAIALQSEPATKALNGGAPKKVIVVPGRLINIVA.

The 'HIGH' region motif lies at 48 to 58 (PYPSGKLHMGH). Residues 645-649 (KMSKS) carry the 'KMSKS' region motif. K648 is a binding site for ATP.

It belongs to the class-I aminoacyl-tRNA synthetase family.

The protein resides in the cytoplasm. It carries out the reaction tRNA(Leu) + L-leucine + ATP = L-leucyl-tRNA(Leu) + AMP + diphosphate. This chain is Leucine--tRNA ligase, found in Polynucleobacter asymbioticus (strain DSM 18221 / CIP 109841 / QLW-P1DMWA-1) (Polynucleobacter necessarius subsp. asymbioticus).